A 73-amino-acid polypeptide reads, in one-letter code: Large ribosomal subunit protein uL24 (73 aa).

Residues 53-65 are compositionally biased toward basic and acidic residues; that stretch reads NPKGGFIKKEKPM. The disordered stretch occupies residues 53 to 73; it reads NPKGGFIKKEKPMHISNVKKA.

Belongs to the universal ribosomal protein uL24 family. Part of the 50S ribosomal subunit.

In terms of biological role, one of two assembly initiator proteins, it binds directly to the 5'-end of the 23S rRNA, where it nucleates assembly of the 50S subunit. Its function is as follows. One of the proteins that surrounds the polypeptide exit tunnel on the outside of the subunit. The chain is Large ribosomal subunit protein uL24 from Helicobacter pylori (strain J99 / ATCC 700824) (Campylobacter pylori J99).